Here is a 332-residue protein sequence, read N- to C-terminus: NADH-quinone oxidoreductase subunit H (332 aa).

The next 9 helical transmembrane spans lie at 4-24, 44-64, 78-98, 120-140, 165-185, 194-214, 255-275, 279-299, and 312-332; these read FAFF…IFAS, IGPD…MIKL, FIFA…LAAI, VALL…FLGG, VGAL…LVDI, FSWL…ALFI, IAGA…FWII, IMMI…RAAF, and YLIL…AVLL.

Belongs to the complex I subunit 1 family. As to quaternary structure, NDH-1 is composed of 14 different subunits. Subunits NuoA, H, J, K, L, M, N constitute the membrane sector of the complex.

The protein localises to the cell inner membrane. It catalyses the reaction a quinone + NADH + 5 H(+)(in) = a quinol + NAD(+) + 4 H(+)(out). Its function is as follows. NDH-1 shuttles electrons from NADH, via FMN and iron-sulfur (Fe-S) centers, to quinones in the respiratory chain. The immediate electron acceptor for the enzyme in this species is believed to be ubiquinone. Couples the redox reaction to proton translocation (for every two electrons transferred, four hydrogen ions are translocated across the cytoplasmic membrane), and thus conserves the redox energy in a proton gradient. This subunit may bind ubiquinone. This is NADH-quinone oxidoreductase subunit H from Campylobacter jejuni subsp. doylei (strain ATCC BAA-1458 / RM4099 / 269.97).